Here is a 153-residue protein sequence, read N- to C-terminus: Histone H2B.8 (153 aa).

Composition is skewed to basic and acidic residues over residues Met1–Pro28 and Glu36–Lys53. A disordered region spans residues Met1 to Lys61. N6-acetyllysine is present on residues Lys7 and Lys37. Lys149 is covalently cross-linked (Glycyl lysine isopeptide (Lys-Gly) (interchain with G-Cter in ubiquitin)).

The protein belongs to the histone H2B family. In terms of assembly, the nucleosome is a histone octamer containing two molecules each of H2A, H2B, H3 and H4 assembled in one H3-H4 heterotetramer and two H2A-H2B heterodimers. The octamer wraps approximately 147 bp of DNA. Can be acetylated to form H2BK6ac and H2BK33ac. In terms of processing, monoubiquitinated by BRE1 to form H2BK143ub1 and deubiquitinated by UBP26. Required for heterochromatic histone H3 di- and trimethylation at H3K4me. May give a specific tag for epigenetic transcriptional activation.

The protein localises to the nucleus. It localises to the chromosome. Its function is as follows. Core component of nucleosome. Nucleosomes wrap and compact DNA into chromatin, limiting DNA accessibility to the cellular machineries which require DNA as a template. Histones thereby play a central role in transcription regulation, DNA repair, DNA replication and chromosomal stability. DNA accessibility is regulated via a complex set of post-translational modifications of histones, also called histone code, and nucleosome remodeling. This Oryza sativa subsp. indica (Rice) protein is Histone H2B.8 (H2B.8).